Here is a 428-residue protein sequence, read N- to C-terminus: Enolase (428 aa).

Residue glutamine 163 coordinates (2R)-2-phosphoglycerate. The Proton donor role is filled by glutamate 205. Residues aspartate 243, glutamate 286, and aspartate 313 each coordinate Mg(2+). Positions 338, 367, 368, and 389 each coordinate (2R)-2-phosphoglycerate. Lysine 338 serves as the catalytic Proton acceptor.

This sequence belongs to the enolase family. Mg(2+) serves as cofactor.

Its subcellular location is the cytoplasm. The protein localises to the secreted. It localises to the cell surface. It carries out the reaction (2R)-2-phosphoglycerate = phosphoenolpyruvate + H2O. Its pathway is carbohydrate degradation; glycolysis; pyruvate from D-glyceraldehyde 3-phosphate: step 4/5. Catalyzes the reversible conversion of 2-phosphoglycerate (2-PG) into phosphoenolpyruvate (PEP). It is essential for the degradation of carbohydrates via glycolysis. The sequence is that of Enolase from Polaromonas naphthalenivorans (strain CJ2).